The following is a 100-amino-acid chain: Urease subunit gamma (100 aa).

The protein belongs to the urease gamma subunit family. As to quaternary structure, heterotrimer of UreA (gamma), UreB (beta) and UreC (alpha) subunits. Three heterotrimers associate to form the active enzyme.

It localises to the cytoplasm. The enzyme catalyses urea + 2 H2O + H(+) = hydrogencarbonate + 2 NH4(+). The protein operates within nitrogen metabolism; urea degradation; CO(2) and NH(3) from urea (urease route): step 1/1. This chain is Urease subunit gamma, found in Pseudomonas syringae pv. syringae (strain B728a).